Reading from the N-terminus, the 251-residue chain is Methionine aminopeptidase (251 aa).

A substrate-binding site is contributed by His76. A divalent metal cation is bound by residues Asp93, Asp104, and His168. His175 provides a ligand contact to substrate. A divalent metal cation is bound by residues Glu202 and Glu233.

This sequence belongs to the peptidase M24A family. Methionine aminopeptidase type 1 subfamily. Monomer. Co(2+) is required as a cofactor. Requires Zn(2+) as cofactor. Mn(2+) serves as cofactor. The cofactor is Fe(2+).

It catalyses the reaction Release of N-terminal amino acids, preferentially methionine, from peptides and arylamides.. Functionally, removes the N-terminal methionine from nascent proteins. The N-terminal methionine is often cleaved when the second residue in the primary sequence is small and uncharged (Met-Ala-, Cys, Gly, Pro, Ser, Thr, or Val). Requires deformylation of the N(alpha)-formylated initiator methionine before it can be hydrolyzed. The chain is Methionine aminopeptidase from Staphylococcus epidermidis (strain ATCC 12228 / FDA PCI 1200).